Here is a 78-residue protein sequence, read N- to C-terminus: D-alanyl carrier protein (78 aa).

The Carrier domain occupies 1–78 (MEFREQVLDL…KIVEALEELR (78 aa)). Ser36 carries the O-(pantetheine 4'-phosphoryl)serine modification.

The protein belongs to the DltC family. Post-translationally, 4'-phosphopantetheine is transferred from CoA to a specific serine of apo-DCP.

The protein localises to the cytoplasm. It functions in the pathway cell wall biogenesis; lipoteichoic acid biosynthesis. Functionally, carrier protein involved in the D-alanylation of lipoteichoic acid (LTA). The loading of thioester-linked D-alanine onto DltC is catalyzed by D-alanine--D-alanyl carrier protein ligase DltA. The DltC-carried D-alanyl group is further transferred to cell membrane phosphatidylglycerol (PG) by forming an ester bond, probably catalyzed by DltD. D-alanylation of LTA plays an important role in modulating the properties of the cell wall in Gram-positive bacteria, influencing the net charge of the cell wall. The sequence is that of D-alanyl carrier protein from Staphylococcus epidermidis (strain ATCC 35984 / DSM 28319 / BCRC 17069 / CCUG 31568 / BM 3577 / RP62A).